The primary structure comprises 404 residues: NADH-quinone oxidoreductase subunit D 1 (404 aa).

It belongs to the complex I 49 kDa subunit family. As to quaternary structure, NDH-1 is composed of 14 different subunits. Subunits NuoB, C, D, E, F, and G constitute the peripheral sector of the complex.

The protein resides in the cell inner membrane. The catalysed reaction is a quinone + NADH + 5 H(+)(in) = a quinol + NAD(+) + 4 H(+)(out). NDH-1 shuttles electrons from NADH, via FMN and iron-sulfur (Fe-S) centers, to quinones in the respiratory chain. The immediate electron acceptor for the enzyme in this species is believed to be ubiquinone. Couples the redox reaction to proton translocation (for every two electrons transferred, four hydrogen ions are translocated across the cytoplasmic membrane), and thus conserves the redox energy in a proton gradient. This Sorangium cellulosum (strain So ce56) (Polyangium cellulosum (strain So ce56)) protein is NADH-quinone oxidoreductase subunit D 1.